Consider the following 184-residue polypeptide: Probable RNA 2'-phosphotransferase (184 aa).

Belongs to the KptA/TPT1 family.

Its function is as follows. Removes the 2'-phosphate from RNA via an intermediate in which the phosphate is ADP-ribosylated by NAD followed by a presumed transesterification to release the RNA and generate ADP-ribose 1''-2''-cyclic phosphate (APPR&gt;P). May function as an ADP-ribosylase. In Shigella boydii serotype 18 (strain CDC 3083-94 / BS512), this protein is Probable RNA 2'-phosphotransferase.